We begin with the raw amino-acid sequence, 526 residues long: ATP synthase subunit alpha (526 aa).

An ATP-binding site is contributed by 171 to 178 (GDRQTGKT).

This sequence belongs to the ATPase alpha/beta chains family. F-type ATPases have 2 components, CF(1) - the catalytic core - and CF(0) - the membrane proton channel. CF(1) has five subunits: alpha(3), beta(3), gamma(1), delta(1), epsilon(1). CF(0) has four main subunits: a, b, b' and c.

It localises to the cell inner membrane. The catalysed reaction is ATP + H2O + 4 H(+)(in) = ADP + phosphate + 5 H(+)(out). Functionally, produces ATP from ADP in the presence of a proton gradient across the membrane. The alpha chain is a regulatory subunit. In Chlorobium limicola (strain DSM 245 / NBRC 103803 / 6330), this protein is ATP synthase subunit alpha.